We begin with the raw amino-acid sequence, 101 residues long: Large ribosomal subunit protein bL27 (101 aa).

The disordered stretch occupies residues 1–21 (MAHKKAGGSSRNGRDSRSKRL).

It belongs to the bacterial ribosomal protein bL27 family.

The polypeptide is Large ribosomal subunit protein bL27 (Buchnera aphidicola subsp. Cinara cedri (strain Cc)).